We begin with the raw amino-acid sequence, 367 residues long: Serine/threonine-protein phosphatase 2A activator 2 (367 aa).

This sequence belongs to the PTPA-type PPIase family.

It is found in the cytoplasm. The enzyme catalyses [protein]-peptidylproline (omega=180) = [protein]-peptidylproline (omega=0). Its function is as follows. PPIases accelerate the folding of proteins. It catalyzes the cis-trans isomerization of proline imidic peptide bonds in oligopeptides. Acts as a regulatory subunit for PP2A-like phosphatases modulating their activity or substrate specificity, probably by inducing a conformational change in the catalytic subunit, a direct target of the PPIase. Can reactivate inactive phosphatase PP2A-phosphatase methylesterase complexes (PP2Ai) in presence of ATP and Mg(2+) by dissociating the inactive form from the complex. The chain is Serine/threonine-protein phosphatase 2A activator 2 (RRD2) from Debaryomyces hansenii (strain ATCC 36239 / CBS 767 / BCRC 21394 / JCM 1990 / NBRC 0083 / IGC 2968) (Yeast).